The chain runs to 863 residues: ATP-dependent helicase Lhr-Core protein 2 (863 aa).

Residues Phe30, Gln37, Lys60, Thr61, Asp179, Glu180, Arg377, and His380 each coordinate ATP. The region spanning 41-234 is the Helicase ATP-binding domain; sequence VIEIHKGENV…FVFGFNDDGT (194 aa). The DEAH box signature appears at 179-182; sequence DEVH. A Helicase C-terminal domain is found at 275–424; that stretch reads RLDELIEQHR…RIKIPQNPLD (150 aa). Residues 418 to 512 are WH domain; the sequence is IPQNPLDVLV…AIYYMNTGTI (95 aa). The segment at 513-863 is domain 4; it reads PDEAKIEVYT…KIMAMIGELE (351 aa).

The protein belongs to the Lhr helicase family. Lhr-Core subfamily. As to quaternary structure, monomer.

It catalyses the reaction ATP + H2O = ADP + phosphate + H(+). With respect to regulation, unwinding of dsRNA duplexes is inhibited by AMP-PMP and ATP-gamma-S. Functionally, a DNA:RNA helicase with a significant strand annealing activity, probably involved in DNA repair and RNA transactions. In vitro has a slow helicase activity with a preference for 3'-overhang duplexes; displaces RNA from 3'-overhang DNA:RNA or RNA:RNA duplexes. 3'-tailed double-stranded (ds)DNA is not unwound. The slow helicase activity on RNA duplexes is ATP-independent. Has strand annealing properties in the absence of ATP; forms 3'-overhang DNA:RNA, 3'-overhang dsRNA and 3'-overhang dsDNA duplexes but not 5'-overhang duplexes. A nucleic acid-dependent ATPase; single-stranded (ss)DNA and RNA are equally stimulatory. Binds ssDNA, RNA, dsDNA and dsRNA duplexes. In Thermococcus barophilus (strain DSM 11836 / MP), this protein is ATP-dependent helicase Lhr-Core protein 2.